The following is a 252-amino-acid chain: Ribosome assembly factor mrt4 (252 aa).

It belongs to the universal ribosomal protein uL10 family. As to quaternary structure, associates with the pre-60S ribosomal particle.

It localises to the nucleus. Its subcellular location is the nucleolus. The protein localises to the cytoplasm. Functionally, component of the ribosome assembly machinery. Nuclear paralog of the ribosomal protein P0, it binds pre-60S subunits at an early stage of assembly in the nucleolus, and is replaced by P0 in cytoplasmic pre-60S subunits and mature 80S ribosomes. The sequence is that of Ribosome assembly factor mrt4 from Neurospora crassa (strain ATCC 24698 / 74-OR23-1A / CBS 708.71 / DSM 1257 / FGSC 987).